We begin with the raw amino-acid sequence, 95 residues long: Selenoprotein K (95 aa).

The chain crosses the membrane as a helical span at residues 20-42 (LSFLTDMFWGITDFVVMFFQSII). The interval 47-95 (TRRGCQNSSSSTRYDDGRGPPGHPRRMGRINHGSGPSAPPMAGGGGUGR) is disordered. A non-standard amino acid (selenocysteine) is located at residue U93.

It belongs to the selenoprotein K family.

The protein resides in the endoplasmic reticulum membrane. The protein localises to the cell membrane. Functionally, required for Ca(2+) flux in immune cells and plays a role in T-cell proliferation and in T-cell and neutrophil migration. Involved in endoplasmic reticulum-associated degradation (ERAD) of soluble glycosylated proteins. Required for cell surface expression of CD36 and involved in macrophage uptake of low-density lipoprotein and in foam cell formation. Required for palmitoylation. This Xenopus laevis (African clawed frog) protein is Selenoprotein K (selenok).